The chain runs to 249 residues: Cytokine-inducible SH2-containing protein (249 aa).

Residues 41-64 (AFPEEPAPTFAAPEPDGSAPQTRD) form a disordered region. The region spanning 84–165 (WYWGSITASE…PDVVSLIQHY (82 aa)) is the SH2 domain. The 49-residue stretch at 200–248 (KLLRPLGRRDSIPSLQHLCRLRINRCTTEVERLPLPRRMGDYLKQYPFQ) folds into the SOCS box domain.

The protein operates within protein modification; protein ubiquitination. SOCS family proteins form part of a classical negative feedback system that regulates cytokine signal transduction. CIS is involved in the negative regulation of cytokines that signal through the JAK-STAT5 pathway such as erythropoietin, prolactin and interleukin 3 (IL3) receptor. Inhibits STAT5 trans-activation by suppressing its tyrosine phosphorylation. May be a substrate-recognition component of a SCF-like ECS (Elongin BC-CUL2/5-SOCS-box protein) E3 ubiquitin-protein ligase complex which mediates the ubiquitination and subsequent proteasomal degradation of target proteins. The chain is Cytokine-inducible SH2-containing protein (CISH) from Gallus gallus (Chicken).